The chain runs to 255 residues: Sugar fermentation stimulation protein homolog (255 aa).

This sequence belongs to the SfsA family.

The chain is Sugar fermentation stimulation protein homolog from Synechococcus sp. (strain WH7803).